We begin with the raw amino-acid sequence, 433 residues long: Keratin, type I cytoskeletal 17 (433 aa).

The interval 1–24 is disordered; the sequence is MTTTIRQFTSSSSIKGSSGLGGGS. A head region spans residues 1–83; sequence MTTTIRQFTS…GGVDGLLAGG (83 aa). Phosphoserine occurs at positions 12 and 13. Residue K15 forms a Glycyl lysine isopeptide (Lys-Gly) (interchain with G-Cter in SUMO1); alternate linkage. K15 participates in a covalent cross-link: Glycyl lysine isopeptide (Lys-Gly) (interchain with G-Cter in SUMO2); alternate. Phosphoserine occurs at positions 25, 32, 34, and 39. The residue at position 44 (S44) is a Phosphoserine; by RPS6KA1. The tract at residues 84-120 is coil 1A; it reads EKATMQNLNDRLASYLDKVRALEEANTELEVKIRDWY. The 312-residue stretch at 84–395 folds into the IF rod domain; the sequence is EKATMQNLND…RLLEGEDAHL (312 aa). A Phosphothreonine modification is found at T110. Residues 121-138 are linker 1; the sequence is QKQAPGPARDYSAYYHTI. The tract at residues 139–230 is coil 1B; it reads EDLKNKILVA…NHEEEMNALR (92 aa). Positions 231-250 are linker 12; that stretch reads GQVGGEINVEMDAAPGVDLS. The coil 2 stretch occupies residues 251-392; sequence RILSEMRDQY…TYRRLLEGED (142 aa). Residue K278 forms a Glycyl lysine isopeptide (Lys-Gly) (interchain with G-Cter in SUMO2) linkage. T279 carries the post-translational modification Phosphothreonine. A Phosphoserine modification is found at S323. The tract at residues 393–433 is tail; it reads AHLTQYKPKEPVTTRQVRTIVEEVQDGKVISSREQVHQTTR. Glycyl lysine isopeptide (Lys-Gly) (interchain with G-Cter in SUMO1); alternate cross-links involve residues K399, K401, and K420. Residues K399, K401, and K420 each participate in a glycyl lysine isopeptide (Lys-Gly) (interchain with G-Cter in SUMO2); alternate cross-link.

The protein belongs to the intermediate filament family. Heterodimer of a type I and a type II keratin. KRT17 associates with KRT6 isomers (KRT6A or KRT6B). Interacts with TRADD and SFN. In terms of processing, phosphorylation at Ser-44 occurs in a growth- and stress-dependent fashion in skin keratinocytes, it has no effect on filament organization. As to expression, expressed strongly in outer root sheath and medulla region of hair follicle and in the early differentiating epithelial cells (trichocytes) within the hair bulb region. Weak expression in the matrix cells of hair bulb. Also present in the sweat gland within the skin, vibrissae follicle, salivary gland, tooth and thymus.

Its subcellular location is the cytoplasm. Its function is as follows. Type I keratin involved in the formation and maintenance of various skin appendages, specifically in determining shape and orientation of hair. Required for the correct growth of hair follicles, in particular for the persistence of the anagen (growth) state. Modulates the function of TNF-alpha in the specific context of hair cycling. Regulates protein synthesis and epithelial cell growth through binding to the adapter protein SFN and by stimulating Akt/mTOR pathway. Involved in tissue repair. May be a marker of basal cell differentiation in complex epithelia and therefore indicative of a certain type of epithelial 'stem cells'. Acts as a promoter of epithelial proliferation by acting a regulator of immune response in skin: promotes Th1/Th17-dominated immune environment contributing to the development of basaloid skin tumors. May act as an autoantigen in the immunopathogenesis of psoriasis, with certain peptide regions being a major target for autoreactive T-cells and hence causing their proliferation. This chain is Keratin, type I cytoskeletal 17 (Krt17), found in Mus musculus (Mouse).